A 406-amino-acid chain; its full sequence is 1-deoxy-D-xylulose 5-phosphate reductoisomerase (406 aa).

NADPH contacts are provided by Thr-21, Gly-22, Ser-23, Ile-24, Gly-47, Gln-50, and Asn-127. Residue Lys-128 coordinates 1-deoxy-D-xylulose 5-phosphate. NADPH is bound at residue Glu-129. A Mn(2+)-binding site is contributed by Asp-151. 1-deoxy-D-xylulose 5-phosphate is bound by residues Ser-152, Glu-153, Ser-177, and His-200. Glu-153 is a Mn(2+) binding site. NADPH is bound at residue Gly-206. Ser-213, Asn-218, Lys-219, and Glu-222 together coordinate 1-deoxy-D-xylulose 5-phosphate. Position 222 (Glu-222) interacts with Mn(2+).

Belongs to the DXR family. Requires Mg(2+) as cofactor. The cofactor is Mn(2+).

It catalyses the reaction 2-C-methyl-D-erythritol 4-phosphate + NADP(+) = 1-deoxy-D-xylulose 5-phosphate + NADPH + H(+). The protein operates within isoprenoid biosynthesis; isopentenyl diphosphate biosynthesis via DXP pathway; isopentenyl diphosphate from 1-deoxy-D-xylulose 5-phosphate: step 1/6. Its function is as follows. Catalyzes the NADPH-dependent rearrangement and reduction of 1-deoxy-D-xylulose-5-phosphate (DXP) to 2-C-methyl-D-erythritol 4-phosphate (MEP). The chain is 1-deoxy-D-xylulose 5-phosphate reductoisomerase from Mycobacterium leprae (strain Br4923).